A 62-amino-acid polypeptide reads, in one-letter code: Delta-theraphotoxin-Cg1a 3 (62 aa).

The first 21 residues, 1 to 21 (MKTSILFVIFSLALVFALSPA), serve as a signal peptide directing secretion. Positions 22 to 29 (TEIEETDR) are excised as a propeptide. 3 disulfides stabilise this stretch: Cys-31-Cys-46, Cys-38-Cys-51, and Cys-45-Cys-58.

It belongs to the neurotoxin 10 (Hwtx-1) family. 33 (Jztx-1) subfamily. As to expression, expressed by the venom gland.

It localises to the secreted. Its function is as follows. Moderately inhibits voltage-gated sodium channels and weakly inhibits voltage-gated potassium channel. Inhibits the inactivation of rat Nav1.2/SCN2A (IC(50)=870 nM), rat Nav1.3/SCN3A (IC(50)=845 nM), rat Nav1.4/SCN4A (IC(50)=339 nM), human Nav1.5/SCN5A (IC(50)=335 nM) and human Nav1.7/SCN9A sodium channels (IC(50)=348 nM). The toxin delays the inactivation of sodium channels without affecting the activation and steady-state inactivation kinetics in the physiological range of voltages. Site-directed mutagenesis of the sodium channel indicates that the toxin interacts with site 3 located at the extracellular S3-S4 linker of domain IV. On potassium channels, it inhibits activation of channels with an IC(50) of 8.05 uM through a voltage sensor-trapping mechanism. It increases muscle contraction in several assays (mouse phrenic nerve-diaphragm, toad heart, rat vas deferens) and is suggested to act both presynaptically and postsynaptically. In Chilobrachys guangxiensis (Chinese earth tiger tarantula), this protein is Delta-theraphotoxin-Cg1a 3.